The sequence spans 560 residues: Membrane protein insertase YidC (560 aa).

A run of 6 helical transmembrane segments spans residues 5 to 25 (IINL…WQYF), 334 to 354 (AIDF…MNFF), 357 to 377 (YVGN…LLMF), 431 to 451 (LPIL…YVTI), 476 to 496 (LFGL…WPIL), and 522 to 542 (FMPL…LIYW).

It belongs to the OXA1/ALB3/YidC family. Type 1 subfamily. As to quaternary structure, interacts with the Sec translocase complex via SecD. Specifically interacts with transmembrane segments of nascent integral membrane proteins during membrane integration.

The protein resides in the cell inner membrane. Its function is as follows. Required for the insertion and/or proper folding and/or complex formation of integral membrane proteins into the membrane. Involved in integration of membrane proteins that insert both dependently and independently of the Sec translocase complex, as well as at least some lipoproteins. Aids folding of multispanning membrane proteins. The chain is Membrane protein insertase YidC from Rickettsia rickettsii (strain Sheila Smith).